Reading from the N-terminus, the 289-residue chain is Mas-related G-protein coupled receptor member G (289 aa).

Over M1–S13 the chain is Extracellular. The chain crosses the membrane as a helical span at residues V14–L34. The Cytoplasmic segment spans residues W35–K42. A helical membrane pass occupies residues K43 to C63. The Extracellular segment spans residues R64 to D78. The helical transmembrane segment at T79–F99 threads the bilayer. At S100 to H120 the chain is on the cytoplasmic side. A helical membrane pass occupies residues A121 to A141. Residues N142 to S163 lie on the Extracellular side of the membrane. The helical transmembrane segment at V164–W184 threads the bilayer. Residues V185–R195 lie on the Cytoplasmic side of the membrane. A helical transmembrane segment spans residues L196 to F216. Residues Y217–Q221 lie on the Extracellular side of the membrane. The chain crosses the membrane as a helical span at residues P222 to N242. Over S243–L289 the chain is Cytoplasmic.

The protein belongs to the G-protein coupled receptor 1 family. Mas subfamily.

It is found in the cell membrane. Functionally, orphan receptor. May regulate nociceptor function and/or development, including the sensation or modulation of pain. This Homo sapiens (Human) protein is Mas-related G-protein coupled receptor member G (MRGPRG).